A 376-amino-acid polypeptide reads, in one-letter code: tRNA-specific 2-thiouridylase MnmA (376 aa).

ATP contacts are provided by residues 16–23 and Leu-42; that span reads AMSGGVDS. The active-site Nucleophile is the Cys-111. Cys-111 and Cys-210 are joined by a disulfide. An ATP-binding site is contributed by Gly-135. Residues 158–160 are interaction with tRNA; the sequence is KDQ. Residue Cys-210 is the Cysteine persulfide intermediate of the active site.

Belongs to the MnmA/TRMU family.

The protein resides in the cytoplasm. It carries out the reaction S-sulfanyl-L-cysteinyl-[protein] + uridine(34) in tRNA + AH2 + ATP = 2-thiouridine(34) in tRNA + L-cysteinyl-[protein] + A + AMP + diphosphate + H(+). Its function is as follows. Catalyzes the 2-thiolation of uridine at the wobble position (U34) of tRNA, leading to the formation of s(2)U34. This chain is tRNA-specific 2-thiouridylase MnmA, found in Streptomyces avermitilis (strain ATCC 31267 / DSM 46492 / JCM 5070 / NBRC 14893 / NCIMB 12804 / NRRL 8165 / MA-4680).